A 177-amino-acid polypeptide reads, in one-letter code: Phycoerythrin beta subunit (177 aa).

Residues Tyr18, Lys28, Asn35, and Asp39 each contribute to the (2R,3E)-phycoerythrobilin site. The 15,16-dihydrobiliverdin site is built by Cys50, Asp54, and Cys61. Cys82, Arg84, and Asp85 together coordinate (2R,3E)-phycoerythrobilin. A 15,16-dihydrobiliverdin-binding site is contributed by Arg129. Asn144 contacts (2R,3E)-phycoerythrobilin. Residues Gln148 and Lys149 each coordinate 15,16-dihydrobiliverdin. Positions 154, 156, and 158 each coordinate (2R,3E)-phycoerythrobilin.

This sequence belongs to the phycobiliprotein family. As to quaternary structure, heterotetramer of 2 different alpha chains and 2 identical beta chains which form 2 alpha-beta heterodimers within the heterotetramer. The two alpha-beta heterodimers are rotated to an open configuration in contrast to the closed configuration found in other cryptophyte species due to the insertion of a single amino acid, 'Asp-65', in a conserved region of the alpha chain. In the open form, the central chromophores are not in physical contact but are separated by a water-filled channel. Post-translationally, contains three phycoerythrobilin chromophores and one 15,16-dihydrobiliverdin chromophore with binding of the phycoerythrobilin chromophores mediated by both the alpha and beta subunits.

It is found in the plastid. Its subcellular location is the chloroplast thylakoid membrane. Light-harvesting photosynthetic bile pigment-protein from the phycobiliprotein complex. This is Phycoerythrin beta subunit from Hemiselmis andersenii (Cryptophyte alga).